The following is a 428-amino-acid chain: MDARATIPEHIARTVILPQGYADDEVIYPAFKWLRDEQPLAMAHIEGYDPMWIATKHADVMQIGKQPGLFSNAEGSEILYDQNNEAFMRSISGGCPHVIDSLTSMDPPTHTAYRGLTLNWFQPASIRKLEENIRRIAQASVQRLLDFDGECDFMTDCALYYPLHVVMTALGVPEDDEPLMLKLTQDFFGVHEPDEQAVAAPRQSADEAARRFHETIATFYDYFNGFTVDRRSCPKDDVMSLLANSKLDGNYIDDKYINAYYVAIATAGHDTTSSSSGGAIIGLSRNPEQLALAKSDPALIPRLVDEAVRWTAPVKSFMRTALADTEVRGQNIKRGDRIMLSYPSANRDEEVFSNPDEFDITRFPNRHLGFGWGAHMCLGQHLAKLEMKIFFEELLPKLKSVELSGPPRLVATNFVGGPKNVPIRFTKA.

C377 contacts heme.

The protein belongs to the cytochrome P450 family. It depends on heme as a cofactor.

It localises to the cytoplasm. In terms of biological role, catalyzes the hydroxylation of alpha-terpineol. The protein is Cytochrome P450-terp (cyp108) of Pseudomonas sp.